A 413-amino-acid polypeptide reads, in one-letter code: NADPH dehydrogenase afvA (413 aa).

Residue 53–56 (APLC) participates in FMN binding. Tyr58 provides a ligand contact to substrate. Positions 88 and 130 each coordinate FMN. 211-214 (HAAH) is a binding site for substrate. FMN is bound by residues Arg264 and 370–371 (GR).

Belongs to the NADH:flavin oxidoreductase/NADH oxidase family. NamA subfamily. FMN serves as cofactor.

The catalysed reaction is A + NADPH + H(+) = AH2 + NADP(+). Its pathway is secondary metabolite biosynthesis. In terms of biological role, NADPH dehydrogenase; part of the gene cluster that mediates the biosynthesis of aflavarin, a bicoumarin that exhibits anti-insectan activity against the fungivorous beetle C.hemipterus. The chain is NADPH dehydrogenase afvA from Aspergillus flavus (strain ATCC 200026 / FGSC A1120 / IAM 13836 / NRRL 3357 / JCM 12722 / SRRC 167).